A 92-amino-acid chain; its full sequence is YcgL domain-containing protein PBPRA1080 (92 aa).

Residues 1 to 84 (MLCSIYKSSK…PVTNLLHQYK (84 aa)) enclose the YcgL domain.

The sequence is that of YcgL domain-containing protein PBPRA1080 from Photobacterium profundum (strain SS9).